Here is a 476-residue protein sequence, read N- to C-terminus: UDP-N-acetylmuramoylalanine--D-glutamate ligase (476 aa).

122–128 serves as a coordination point for ATP; it reads GSNAKST.

It belongs to the MurCDEF family.

It localises to the cytoplasm. It carries out the reaction UDP-N-acetyl-alpha-D-muramoyl-L-alanine + D-glutamate + ATP = UDP-N-acetyl-alpha-D-muramoyl-L-alanyl-D-glutamate + ADP + phosphate + H(+). Its pathway is cell wall biogenesis; peptidoglycan biosynthesis. Functionally, cell wall formation. Catalyzes the addition of glutamate to the nucleotide precursor UDP-N-acetylmuramoyl-L-alanine (UMA). The protein is UDP-N-acetylmuramoylalanine--D-glutamate ligase of Psychrobacter arcticus (strain DSM 17307 / VKM B-2377 / 273-4).